A 121-amino-acid polypeptide reads, in one-letter code: MKKQSGMTLIEVMVALVVFALAGLAVMQATLQQTRQLGRMEEKTLASWLADNQLVQLRLENRWPALSWSETTLQAAGVSWHIRWQGVETDLPQLRALDVEVRHAKSDKTPVSSLRTYVTSP.

Positions 1–6 (MKKQSG) are cleaved as a propeptide — leader sequence. Methionine 7 carries the N-methylmethionine modification. The helical transmembrane segment at 7–27 (MTLIEVMVALVVFALAGLAVM) threads the bilayer.

It belongs to the GSP I family. Type II secretion is composed of four main components: the outer membrane complex, the inner membrane complex, the cytoplasmic secretion ATPase and the periplasm-spanning pseudopilus. Interacts with core component PulG. Post-translationally, cleaved by prepilin peptidase. In terms of processing, methylated by prepilin peptidase at the amino group of the N-terminal methionine once the leader sequence is cleaved by prepilin peptidase.

It is found in the cell inner membrane. In terms of biological role, component of the type II secretion system required for the energy-dependent secretion of extracellular factors such as proteases and toxins from the periplasm. Part of the pseudopilus tip complex that is critical for the recognition and binding of secretion substrates. The sequence is that of Type II secretion system protein I (pulI) from Klebsiella pneumoniae.